A 30-amino-acid polypeptide reads, in one-letter code: Rothein 3.1 (30 aa).

L30 is subject to Leucine amide.

Expressed by the skin dorsal glands.

Its subcellular location is the secreted. Its function is as follows. Lacks antimicrobial activity. Does not inhibit the formation of NO by neuronal nitric oxide. The chain is Rothein 3.1 from Litoria rothii (Roth's tree frog).